Here is a 274-residue protein sequence, read N- to C-terminus: 2,3,4,5-tetrahydropyridine-2,6-dicarboxylate N-succinyltransferase (274 aa).

Belongs to the transferase hexapeptide repeat family.

Its subcellular location is the cytoplasm. It catalyses the reaction (S)-2,3,4,5-tetrahydrodipicolinate + succinyl-CoA + H2O = (S)-2-succinylamino-6-oxoheptanedioate + CoA. The protein operates within amino-acid biosynthesis; L-lysine biosynthesis via DAP pathway; LL-2,6-diaminopimelate from (S)-tetrahydrodipicolinate (succinylase route): step 1/3. The sequence is that of 2,3,4,5-tetrahydropyridine-2,6-dicarboxylate N-succinyltransferase from Alteromonas mediterranea (strain DSM 17117 / CIP 110805 / LMG 28347 / Deep ecotype).